A 318-amino-acid polypeptide reads, in one-letter code: Mitochondrial coenzyme A transporter SLC25A42 (318 aa).

Solcar repeat units lie at residues 31–117, 129–214, and 224–312; these read RQVL…YKRI, LPPW…LKSL, and PYPF…MQIL. Helical transmembrane passes span 33–53, 89–109, 135–155, 186–206, 230–250, and 293–313; these read VLSS…AVAP, LWRG…IQFS, LFAG…LDLV, LYHG…LSFF, MIFG…LDVV, and VKGP…QILL.

This sequence belongs to the mitochondrial carrier (TC 2.A.29) family.

It localises to the mitochondrion inner membrane. The enzyme catalyses ADP(out) + CoA(in) = ADP(in) + CoA(out). It carries out the reaction 3'-dephospho-CoA(in) + ADP(out) = 3'-dephospho-CoA(out) + ADP(in). The catalysed reaction is adenosine 3',5'-bisphosphate(in) + ADP(out) = adenosine 3',5'-bisphosphate(out) + ADP(in). It catalyses the reaction AMP(in) + ADP(out) = AMP(out) + ADP(in). The enzyme catalyses dADP(in) + ADP(out) = dADP(out) + ADP(in). It carries out the reaction ADP(in) + ATP(out) = ADP(out) + ATP(in). In terms of biological role, mitochondrial carrier mediating the transport of coenzyme A (CoA) in mitochondria in exchange for intramitochondrial (deoxy)adenine nucleotides and adenosine 3',5'-diphosphate. This Homo sapiens (Human) protein is Mitochondrial coenzyme A transporter SLC25A42 (SLC25A42).